Here is a 1073-residue protein sequence, read N- to C-terminus: Serine/threonine-protein kinase 11-interacting protein (1073 aa).

LRR repeat units lie at residues 166–187 (ELQT…LQLL), 189–210 (ALRV…LTTL), 212–233 (ELEY…GIFS), 236–257 (KLLT…EQLV), 258–279 (NLQH…APLS), and 283–304 (YLKK…RSAT). Disordered regions lie at residues 389-409 (VKVR…SQAL), 455-533 (SRSA…EKPE), 724-817 (EVSS…QGMK), and 834-859 (MGSY…SEET). Residues 515–532 (REEEADELMLGEEEDEKP) show a composition bias toward acidic residues. Polar residues-rich tracts occupy residues 779 to 788 (MDTSNSTRTP) and 843 to 859 (RGPT…SEET).

The protein belongs to the STK11IP family.

It localises to the cytoplasm. This is Serine/threonine-protein kinase 11-interacting protein (STK11IP) from Gallus gallus (Chicken).